The following is a 232-amino-acid chain: Large ribosomal subunit protein uL1 (232 aa).

It belongs to the universal ribosomal protein uL1 family. Part of the 50S ribosomal subunit.

Binds directly to 23S rRNA. The L1 stalk is quite mobile in the ribosome, and is involved in E site tRNA release. Functionally, protein L1 is also a translational repressor protein, it controls the translation of the L11 operon by binding to its mRNA. This chain is Large ribosomal subunit protein uL1, found in Methylobacterium radiotolerans (strain ATCC 27329 / DSM 1819 / JCM 2831 / NBRC 15690 / NCIMB 10815 / 0-1).